The chain runs to 230 residues: 3,4-dihydroxy-2-butanone 4-phosphate synthase (230 aa).

D-ribulose 5-phosphate is bound by residues 42-43 (RE), D47, 155-159 (RRGHT), and E179. A Mg(2+)-binding site is contributed by E43. H158 is a binding site for Mg(2+).

It belongs to the DHBP synthase family. Homodimer. It depends on Mg(2+) as a cofactor. Mn(2+) serves as cofactor.

The catalysed reaction is D-ribulose 5-phosphate = (2S)-2-hydroxy-3-oxobutyl phosphate + formate + H(+). The protein operates within cofactor biosynthesis; riboflavin biosynthesis; 2-hydroxy-3-oxobutyl phosphate from D-ribulose 5-phosphate: step 1/1. Its function is as follows. Catalyzes the conversion of D-ribulose 5-phosphate to formate and 3,4-dihydroxy-2-butanone 4-phosphate. This chain is 3,4-dihydroxy-2-butanone 4-phosphate synthase, found in Bordetella pertussis (strain Tohama I / ATCC BAA-589 / NCTC 13251).